The sequence spans 422 residues: Serine hydroxymethyltransferase (422 aa).

Residues leucine 118 and 122 to 124 each bind (6S)-5,6,7,8-tetrahydrofolate; that span reads GHL. Position 227 is an N6-(pyridoxal phosphate)lysine (lysine 227). Residues glutamate 243 and 351-353 each bind (6S)-5,6,7,8-tetrahydrofolate; that span reads SPF.

The protein belongs to the SHMT family. Homodimer. Pyridoxal 5'-phosphate is required as a cofactor.

The protein localises to the cytoplasm. The enzyme catalyses (6R)-5,10-methylene-5,6,7,8-tetrahydrofolate + glycine + H2O = (6S)-5,6,7,8-tetrahydrofolate + L-serine. Its pathway is one-carbon metabolism; tetrahydrofolate interconversion. It participates in amino-acid biosynthesis; glycine biosynthesis; glycine from L-serine: step 1/1. In terms of biological role, catalyzes the reversible interconversion of serine and glycine with tetrahydrofolate (THF) serving as the one-carbon carrier. This reaction serves as the major source of one-carbon groups required for the biosynthesis of purines, thymidylate, methionine, and other important biomolecules. Also exhibits THF-independent aldolase activity toward beta-hydroxyamino acids, producing glycine and aldehydes, via a retro-aldol mechanism. The sequence is that of Serine hydroxymethyltransferase from Fervidobacterium nodosum (strain ATCC 35602 / DSM 5306 / Rt17-B1).